Here is a 339-residue protein sequence, read N- to C-terminus: Protein-arginine kinase (339 aa).

The 229-residue stretch at 14–242 (IVINSNISLS…LNVISEEKKF (229 aa)) folds into the Phosphagen kinase C-terminal domain. ATP-binding positions include 17 to 21 (NSNIS), 164 to 168 (RASVN), and 195 to 200 (KGLYEE).

This sequence belongs to the ATP:guanido phosphotransferase family.

The enzyme catalyses L-arginyl-[protein] + ATP = N(omega)-phospho-L-arginyl-[protein] + ADP + H(+). In terms of biological role, catalyzes the specific phosphorylation of arginine residues in proteins. This chain is Protein-arginine kinase, found in Clostridium botulinum (strain Eklund 17B / Type B).